Reading from the N-terminus, the 566-residue chain is Mucolipin-2 (566 aa).

The Cytoplasmic portion of the chain corresponds to M1–K65. Residues L66–S86 form a helical membrane-spanning segment. Residues N87–H288 are Extracellular-facing. The tract at residues K107–T123 is extracellular/lumenal pore loop. Cystine bridges form between C164-C190 and C243-C274. The chain crosses the membrane as a helical span at residues Y289–T309. Residues R310–W346 lie on the Cytoplasmic side of the membrane. A helical transmembrane segment spans residues Y347–I367. The Extracellular segment spans residues K368–D376. A helical transmembrane segment spans residues V377 to L397. Topologically, residues G398–R419 are cytoplasmic. A helical membrane pass occupies residues F420–G440. Topologically, residues P441–N448 are extracellular. Positions L449–F469 form an intramembrane region, pore-forming. Positions N461–D464 match the Selectivity filter motif. The Extracellular portion of the chain corresponds to A470–W480. The chain crosses the membrane as a helical span at residues L481–F502. The Cytoplasmic portion of the chain corresponds to I503–D566.

It belongs to the transient receptor (TC 1.A.4) family. Polycystin subfamily. MCOLN2 sub-subfamily. In terms of assembly, forms homooligomeric complexes; probably tetrameric. Can heterooligomerize with MCOLN1; heteromeric assemblies have different channel properties as compared to the respective homooligomers and may be tissue-specific. Interacts with TMEM176A. Expressed in activated macrophages and microglia (at protein level). In terms of tissue distribution, isoform 1 is widely expressed at very low levels. As to expression, isoform 2 is expressed at high levels in lymphoid tissues (thymus and spleen) and kidney, and at moderate levels in heart, lung, liver and stomach.

The protein localises to the cell membrane. Its subcellular location is the lysosome membrane. It is found in the recycling endosome membrane. It carries out the reaction Ca(2+)(in) = Ca(2+)(out). The enzyme catalyses Fe(2+)(in) = Fe(2+)(out). With respect to regulation, fe(2+) channel activity is potentiated by low pH. Its function is as follows. Nonselective cation channel probably playing a role in the regulation of membrane trafficking events. Acts as a Ca(2+)-permeable cation channel with inwardly rectifying activity. May activate ARF6 and be involved in the trafficking of GPI-anchored cargo proteins to the cell surface via the ARF6-regulated recycling pathway. May play a role in immune processes. In adaptive immunity, TRPML2 and TRPML1 may play redundant roles in the function of the specialized lysosomes of B cells. In the innate immune response, may play a role in the regulation of chemokine secretion and macrophage migration. Through a possible and probably tissue-specific heteromerization with MCOLN1 may be at least in part involved in many lysosome-dependent cellular events. Also functions as a Fe(2+) permeable channel. In Mus musculus (Mouse), this protein is Mucolipin-2 (Mcoln2).